We begin with the raw amino-acid sequence, 159 residues long: MVRIGLQLKANLENVTNLKAEGEDFRWYLMLKCMNCGEVTKQWVYMCLMESQPVKGGRGYAHFVSKCKLCHRENSVDIMKDSIHPYLASHNGKFHTIVSFDCRGVEPTDFSPRTGWTAEGENTSTPFEVDLTEKDWSDYDEKAQNAVGVYGVTSQFIKL.

Zn(2+) is bound by residues Cys33, Cys36, Cys67, and Cys70.

This sequence belongs to the UPF0587 family.

In Nematostella vectensis (Starlet sea anemone), this protein is UPF0587 protein v1g245604.